A 557-amino-acid chain; its full sequence is Phosphoribosylaminoimidazole carboxylase, chloroplastic (557 aa).

In terms of domain architecture, ATP-grasp spans Lys-108–Val-293. An ATP-binding site is contributed by Trp-132–Ala-189. The AIR carboxylase catalytic subunit stretch occupies residues Cys-387–Ser-557.

It in the C-terminal section; belongs to the AIR carboxylase family. Class I subfamily.

The protein localises to the plastid. Its subcellular location is the chloroplast. The enzyme catalyses 5-amino-1-(5-phospho-D-ribosyl)imidazole-4-carboxylate + H(+) = 5-amino-1-(5-phospho-beta-D-ribosyl)imidazole + CO2. Its pathway is purine metabolism; IMP biosynthesis via de novo pathway; 5-amino-1-(5-phospho-D-ribosyl)imidazole-4-carboxylate from 5-amino-1-(5-phospho-D-ribosyl)imidazole (carboxylase route): step 1/1. This is Phosphoribosylaminoimidazole carboxylase, chloroplastic (PURKE) from Vigna aconitifolia (Moth bean).